A 302-amino-acid polypeptide reads, in one-letter code: Oxygen-dependent coproporphyrinogen-III oxidase (302 aa).

S94 is a binding site for substrate. Residues H98 and H108 each coordinate a divalent metal cation. H108 acts as the Proton donor in catalysis. 110-112 (NVR) contributes to the substrate binding site. H147 and H177 together coordinate a divalent metal cation. An important for dimerization region spans residues 242 to 277 (YVEFNLVYDRGTLFGLQTGGRTESILMSMPPLVRWQ). Substrate is bound at residue 260–262 (GGR).

This sequence belongs to the aerobic coproporphyrinogen-III oxidase family. As to quaternary structure, homodimer. A divalent metal cation serves as cofactor.

The protein localises to the cytoplasm. It carries out the reaction coproporphyrinogen III + O2 + 2 H(+) = protoporphyrinogen IX + 2 CO2 + 2 H2O. It functions in the pathway porphyrin-containing compound metabolism; protoporphyrin-IX biosynthesis; protoporphyrinogen-IX from coproporphyrinogen-III (O2 route): step 1/1. Involved in the heme biosynthesis. Catalyzes the aerobic oxidative decarboxylation of propionate groups of rings A and B of coproporphyrinogen-III to yield the vinyl groups in protoporphyrinogen-IX. The polypeptide is Oxygen-dependent coproporphyrinogen-III oxidase (Shewanella oneidensis (strain ATCC 700550 / JCM 31522 / CIP 106686 / LMG 19005 / NCIMB 14063 / MR-1)).